Here is a 247-residue protein sequence, read N- to C-terminus: ATP synthase subunit a, chloroplastic (247 aa).

5 consecutive transmembrane segments (helical) span residues 38–58, 95–115, 134–154, 199–219, and 220–240; these read QVLI…IIAV, VPFI…GALL, INTT…AGLT, LVVV…VMFL, and GLFT…AYIG.

This sequence belongs to the ATPase A chain family. As to quaternary structure, F-type ATPases have 2 components, CF(1) - the catalytic core - and CF(0) - the membrane proton channel. CF(1) has five subunits: alpha(3), beta(3), gamma(1), delta(1), epsilon(1). CF(0) has four main subunits: a, b, b' and c.

It localises to the plastid. The protein resides in the chloroplast thylakoid membrane. Its function is as follows. Key component of the proton channel; it plays a direct role in the translocation of protons across the membrane. In Ranunculus macranthus (Large buttercup), this protein is ATP synthase subunit a, chloroplastic.